Reading from the N-terminus, the 274-residue chain is MSDLYCVFGNPIAHSKSPAIHAAFAVQTAQDLRYEARLAALDGFGLAIAEFVAVGGKGANVTVPFKEEAYRLATRLSDRAARAGAVNTLVFDGPEVFGDNTDGAGLVRDITNNLGFSLVGKRILLLGAGGASRGVIAPLLAEKPASLIIANRSADKAVALAQAFADMAPLGGGSFAETAGKSFDLVINATSASLSGASLPLPPGIFAPGSLAYDMMYGKGETPFLTLARQQGAARCADGLGMLVEQAAEAFFVWRGIRPGTAQVLAELRAKLVA.

Shikimate is bound by residues Ser-15 to Ser-17 and Thr-62. Lys-66 serves as the catalytic Proton acceptor. Asp-78 is an NADP(+) binding site. Asn-87 and Asp-102 together coordinate shikimate. NADP(+) is bound by residues Gly-127–Ala-131 and Met-215. Tyr-217 provides a ligand contact to shikimate. Residue Gly-239 participates in NADP(+) binding.

It belongs to the shikimate dehydrogenase family. In terms of assembly, homodimer.

The enzyme catalyses shikimate + NADP(+) = 3-dehydroshikimate + NADPH + H(+). It participates in metabolic intermediate biosynthesis; chorismate biosynthesis; chorismate from D-erythrose 4-phosphate and phosphoenolpyruvate: step 4/7. Its function is as follows. Involved in the biosynthesis of the chorismate, which leads to the biosynthesis of aromatic amino acids. Catalyzes the reversible NADPH linked reduction of 3-dehydroshikimate (DHSA) to yield shikimate (SA). The sequence is that of Shikimate dehydrogenase (NADP(+)) from Dechloromonas aromatica (strain RCB).